The chain runs to 312 residues: MAFKLATKAAAASPAAAHRGGLARGPEGTSRVAFGPAPRNKGLRAANNSATPVAKEERVDRSEILTLDSIRQVLIRLEDSIIFGLLERAQFCYNADTYDSNAFHMDGFGGSLVEYMVRETEKLHAQVGRYKSPDEHPFFPEDLPEPRLPPMQYPRVLHPIADSININKEIWKMYFDELLPRLVKKGSDGNAGSSALCDTTCLQALSKRIHYGKFVAEAKFQESPEAYMPAIIAQDRDQLMHLLTYETVERAIEHRVEAKAKIFGQEVNIGVEDNGSPPVYKIVPSLVAELYSYRIMPLTKEVQIAYLLRRLD.

Residues 1–44 (MAFKLATKAAAASPAAAHRGGLARGPEGTSRVAFGPAPRNKGLR) constitute a chloroplast transit peptide. The segment at 16–58 (AAHRGGLARGPEGTSRVAFGPAPRNKGLRAANNSATPVAKEER) is disordered. L-phenylalanine-binding positions include Arg58 and 190–193 (NAGS). L-tyrosine is bound by residues Arg58 and 190–193 (NAGS). A Chorismate mutase domain is found at 58 to 312 (RVDRSEILTL…QIAYLLRRLD (255 aa)).

Homodimer. Interacts with Cmu1 of the fungal pathogen Ustilago maydis.

It is found in the plastid. Its subcellular location is the chloroplast. It catalyses the reaction chorismate = prephenate. The protein operates within metabolic intermediate biosynthesis; prephenate biosynthesis; prephenate from chorismate: step 1/1. Its activity is regulated as follows. Allosterically inhibited by tyrosine and phenylalanine. Activated by tryptophan. In terms of biological role, may play a role in chloroplast biogenesis. This Zea mays (Maize) protein is Chorismate mutase 1, chloroplastic.